The sequence spans 62 residues: Large ribosomal subunit protein eL19 (62 aa).

It belongs to the eukaryotic ribosomal protein eL19 family.

This chain is Large ribosomal subunit protein eL19 (RPL19), found in Zea mays (Maize).